The following is a 38-amino-acid chain: Alpha-amylase (38 aa).

The protein belongs to the glycosyl hydrolase 13 family. Monomer. The cofactor is Ca(2+). Requires chloride as cofactor. In terms of tissue distribution, expressed by the venom gland.

The protein resides in the secreted. The enzyme catalyses Endohydrolysis of (1-&gt;4)-alpha-D-glucosidic linkages in polysaccharides containing three or more (1-&gt;4)-alpha-linked D-glucose units.. The chain is Alpha-amylase from Tityus serrulatus (Brazilian scorpion).